The chain runs to 234 residues: Thiamine-phosphate synthase (234 aa).

Residues 65–69 (QYRNK) and Asn97 contribute to the 4-amino-2-methyl-5-(diphosphooxymethyl)pyrimidine site. Mg(2+)-binding residues include Asp98 and Asp117. Position 136 (Ser136) interacts with 4-amino-2-methyl-5-(diphosphooxymethyl)pyrimidine. 163-165 (SHT) provides a ligand contact to 2-[(2R,5Z)-2-carboxy-4-methylthiazol-5(2H)-ylidene]ethyl phosphate. Lys166 contributes to the 4-amino-2-methyl-5-(diphosphooxymethyl)pyrimidine binding site. 2-[(2R,5Z)-2-carboxy-4-methylthiazol-5(2H)-ylidene]ethyl phosphate is bound by residues Gly192 and 212–213 (IS).

It belongs to the thiamine-phosphate synthase family. It depends on Mg(2+) as a cofactor.

It catalyses the reaction 2-[(2R,5Z)-2-carboxy-4-methylthiazol-5(2H)-ylidene]ethyl phosphate + 4-amino-2-methyl-5-(diphosphooxymethyl)pyrimidine + 2 H(+) = thiamine phosphate + CO2 + diphosphate. The enzyme catalyses 2-(2-carboxy-4-methylthiazol-5-yl)ethyl phosphate + 4-amino-2-methyl-5-(diphosphooxymethyl)pyrimidine + 2 H(+) = thiamine phosphate + CO2 + diphosphate. The catalysed reaction is 4-methyl-5-(2-phosphooxyethyl)-thiazole + 4-amino-2-methyl-5-(diphosphooxymethyl)pyrimidine + H(+) = thiamine phosphate + diphosphate. Its pathway is cofactor biosynthesis; thiamine diphosphate biosynthesis; thiamine phosphate from 4-amino-2-methyl-5-diphosphomethylpyrimidine and 4-methyl-5-(2-phosphoethyl)-thiazole: step 1/1. Condenses 4-methyl-5-(beta-hydroxyethyl)thiazole monophosphate (THZ-P) and 2-methyl-4-amino-5-hydroxymethyl pyrimidine pyrophosphate (HMP-PP) to form thiamine monophosphate (TMP). The chain is Thiamine-phosphate synthase from Xylella fastidiosa (strain 9a5c).